The chain runs to 1131 residues: Translation initiation factor IF-2 (1131 aa).

Residues 49–542 (KFKGSVSSNE…AFIMPKPQQS (494 aa)) are disordered. Positions 60–75 (KSIDNGKASRVEKPEK) are enriched in basic and acidic residues. Composition is skewed to polar residues over residues 76–88 (NNSV…QTPS) and 108–125 (SEQN…NIQS). The span at 127-138 (GDRKYQHTDRRP) shows a compositional bias: basic and acidic residues. Polar residues predominate over residues 139-152 (QGNNGEGPQTSTNS). Basic and acidic residues-rich tracts occupy residues 164 to 180 (GDRR…RPYN) and 223 to 239 (GDRR…RPYN). Residues 411–436 (GQGGYGGRPQGQGSYGGRPQGQGGYA) show a composition bias toward gly residues. Basic and acidic residues-rich tracts occupy residues 450-479 (KDFD…KSSI) and 487-530 (LTKE…DPNR). A tr-type G domain is found at 632-801 (KRPPVVCVMG…ILTAEMGELK (170 aa)). The interval 641–648 (GHVDHGKT) is G1. Residue 641-648 (GHVDHGKT) coordinates GTP. A G2 region spans residues 666–670 (GITQH). Positions 687-690 (DTPG) are G3. GTP-binding positions include 687 to 691 (DTPGH) and 741 to 744 (NKID). Positions 741-744 (NKID) are G4. A G5 region spans residues 777-779 (SAH).

This sequence belongs to the TRAFAC class translation factor GTPase superfamily. Classic translation factor GTPase family. IF-2 subfamily.

The protein localises to the cytoplasm. Functionally, one of the essential components for the initiation of protein synthesis. Protects formylmethionyl-tRNA from spontaneous hydrolysis and promotes its binding to the 30S ribosomal subunits. Also involved in the hydrolysis of GTP during the formation of the 70S ribosomal complex. The chain is Translation initiation factor IF-2 from Lachnoclostridium phytofermentans (strain ATCC 700394 / DSM 18823 / ISDg) (Clostridium phytofermentans).